Consider the following 368-residue polypeptide: Lipoyl synthase, chloroplastic (368 aa).

2 disordered regions span residues 1-30 (MQSS…RGSV) and 42-61 (PTVG…RDPE). Positions 94, 99, 105, 131, 135, 138, and 346 each coordinate [4Fe-4S] cluster. One can recognise a Radical SAM core domain in the interval 114–335 (GEGDGIATAT…KEYGESVGFR (222 aa)).

The protein belongs to the radical SAM superfamily. Lipoyl synthase family. It depends on [4Fe-4S] cluster as a cofactor.

It localises to the plastid. Its subcellular location is the chloroplast. It carries out the reaction [[Fe-S] cluster scaffold protein carrying a second [4Fe-4S](2+) cluster] + N(6)-octanoyl-L-lysyl-[protein] + 2 oxidized [2Fe-2S]-[ferredoxin] + 2 S-adenosyl-L-methionine + 4 H(+) = [[Fe-S] cluster scaffold protein] + N(6)-[(R)-dihydrolipoyl]-L-lysyl-[protein] + 4 Fe(3+) + 2 hydrogen sulfide + 2 5'-deoxyadenosine + 2 L-methionine + 2 reduced [2Fe-2S]-[ferredoxin]. It functions in the pathway protein modification; protein lipoylation via endogenous pathway; protein N(6)-(lipoyl)lysine from octanoyl-[acyl-carrier-protein]: step 2/2. In terms of biological role, catalyzes the radical-mediated insertion of two sulfur atoms into the C-6 and C-8 positions of the octanoyl moiety bound to the lipoyl domains of lipoate-dependent enzymes, thereby converting the octanoylated domains into lipoylated derivatives. The sequence is that of Lipoyl synthase, chloroplastic from Sorghum bicolor (Sorghum).